The sequence spans 762 residues: N,N-dimethylformamidase beta subunit (762 aa).

In terms of assembly, heterotetramer of two DmfA1 (alpha) and two DmfA2 (beta) subunits.

The catalysed reaction is N,N-dimethylformamide + H2O = dimethylamine + formate. Its activity is regulated as follows. Activity is slightly inhibited by Mg(2+) and Mn(2+), and slightly increased by Cu(2+). Activity is slightly inhibited by the chelating agents 8-hydroxyquinoline, ethylenediaminetetraacetate, o-phenanthroline and 2,2'-bipyridyl. Hydrolyzes N,N-dimethylformamide, and to a lesser extent N,N-dimethylacetamide and N,N-diethylacetamide. Has no activity against the substituted amides N-methylformamide, N-ethylformamide, N-ethylformamide and N-methylacetamide or the unsubstituted amides formamide, nicotinamide, acetoamide, benzamide, acetamide and acrylamide. The sequence is that of N,N-dimethylformamidase beta subunit from Alcaligenes sp.